The primary structure comprises 141 residues: Putative antiporter subunit mnhB2 (141 aa).

Helical transmembrane passes span 10 to 30 (SVTK…FFAG), 35 to 55 (GGGF…FLAF), 70 to 90 (KLMI…MFFG), and 116 to 136 (LFEL…MLSI).

This sequence belongs to the CPA3 antiporters (TC 2.A.63) subunit B family. As to quaternary structure, may form a heterooligomeric complex that consists of seven subunits: mnhA2, mnhB2, mnhC2, mnhD2, mnhE2, mnhF2 and mnhG2.

Its subcellular location is the cell membrane. This is Putative antiporter subunit mnhB2 (mnhB2) from Staphylococcus epidermidis (strain ATCC 35984 / DSM 28319 / BCRC 17069 / CCUG 31568 / BM 3577 / RP62A).